The following is a 189-amino-acid chain: UPF0301 protein PST_3956 (189 aa).

The protein belongs to the UPF0301 (AlgH) family.

The protein is UPF0301 protein PST_3956 of Stutzerimonas stutzeri (strain A1501) (Pseudomonas stutzeri).